Consider the following 303-residue polypeptide: Ribosomal RNA small subunit methyltransferase H (303 aa).

S-adenosyl-L-methionine is bound by residues 33–35, Asp-52, Phe-79, Asp-97, and Gln-104; that span reads GGH.

The protein belongs to the methyltransferase superfamily. RsmH family.

It is found in the cytoplasm. It carries out the reaction cytidine(1402) in 16S rRNA + S-adenosyl-L-methionine = N(4)-methylcytidine(1402) in 16S rRNA + S-adenosyl-L-homocysteine + H(+). Specifically methylates the N4 position of cytidine in position 1402 (C1402) of 16S rRNA. The sequence is that of Ribosomal RNA small subunit methyltransferase H from Wolinella succinogenes (strain ATCC 29543 / DSM 1740 / CCUG 13145 / JCM 31913 / LMG 7466 / NCTC 11488 / FDC 602W) (Vibrio succinogenes).